The sequence spans 948 residues: Protocadherin alpha-2 (948 aa).

Positions 1 to 22 (MASSIRRGRGAWTRLLSLLLLA) are cleaved as a signal peptide. Residues 23 to 697 (AWEVGSGQLR…GSEATLVDVN (675 aa)) lie on the Extracellular side of the membrane. Cadherin domains lie at 30–133 (QLRY…PPIF), 157–242 (ASDA…EPTF), 243–350 (AQSV…TPEV), 351–455 (SITS…APAF), 456–565 (AQPE…APAL), and 588–678 (GHVV…APKA). 4 N-linked (GlcNAc...) asparagine glycosylation sites follow: Asn257, Asn265, Asn362, and Asn548. A helical membrane pass occupies residues 698-718 (VYLIIAICAVSSLLVLTVLLY). Residues 719–948 (TALRCSVPPT…GNSTTDNSDQ (230 aa)) are Cytoplasmic-facing. The stretch at 734–737 (PGKP) is one PXXP 1 repeat. The 5 X 4 AA repeats of P-X-X-P stretch occupies residues 734–892 (PGKPTLVCSS…PDKFIIPGSP (159 aa)). Disordered stretches follow at residues 754–801 (RRQR…RQPN), 829–854 (GPGG…EVSP), and 868–948 (KYGP…NSDQ). Positions 783–795 (AEEKQLSESEYVG) are enriched in basic and acidic residues. 4 PXXP repeats span residues 797–800 (PRQP), 830–833 (PGGP), 871–874 (PGNP), and 889–892 (PGSP). Residues 907–921 (DKSDFITFGKKEETK) are compositionally biased toward basic and acidic residues.

The protein localises to the cell membrane. Functionally, potential calcium-dependent cell-adhesion protein. May be involved in the establishment and maintenance of specific neuronal connections in the brain. This Homo sapiens (Human) protein is Protocadherin alpha-2 (PCDHA2).